The chain runs to 156 residues: Arginine repressor (156 aa).

This sequence belongs to the ArgR family.

The protein localises to the cytoplasm. The protein operates within amino-acid biosynthesis; L-arginine biosynthesis [regulation]. Regulates arginine biosynthesis genes. In Cronobacter sakazakii (strain ATCC BAA-894) (Enterobacter sakazakii), this protein is Arginine repressor.